A 426-amino-acid polypeptide reads, in one-letter code: D-tagatose-1,6-bisphosphate aldolase subunit KbaZ (426 aa).

The protein belongs to the GatZ/KbaZ family. KbaZ subfamily. Forms a complex with KbaY.

Its pathway is carbohydrate metabolism; D-tagatose 6-phosphate degradation; D-glyceraldehyde 3-phosphate and glycerone phosphate from D-tagatose 6-phosphate: step 2/2. In terms of biological role, component of the tagatose-1,6-bisphosphate aldolase KbaYZ that is required for full activity and stability of the Y subunit. Could have a chaperone-like function for the proper and stable folding of KbaY. When expressed alone, KbaZ does not show any aldolase activity. This Escherichia coli O17:K52:H18 (strain UMN026 / ExPEC) protein is D-tagatose-1,6-bisphosphate aldolase subunit KbaZ.